The primary structure comprises 207 residues: 3-isopropylmalate dehydratase small subunit (207 aa).

This sequence belongs to the LeuD family. LeuD type 1 subfamily. Heterodimer of LeuC and LeuD.

It carries out the reaction (2R,3S)-3-isopropylmalate = (2S)-2-isopropylmalate. It functions in the pathway amino-acid biosynthesis; L-leucine biosynthesis; L-leucine from 3-methyl-2-oxobutanoate: step 2/4. Functionally, catalyzes the isomerization between 2-isopropylmalate and 3-isopropylmalate, via the formation of 2-isopropylmaleate. This chain is 3-isopropylmalate dehydratase small subunit, found in Rhodospirillum rubrum (strain ATCC 11170 / ATH 1.1.1 / DSM 467 / LMG 4362 / NCIMB 8255 / S1).